The chain runs to 259 residues: MNIVVCLKQVPDTAEVRIDPVKGTLIREGVPSIINPDDKNALEEALVLKDNYGAHVTVISMGPPQAKNALVEALAMGADEAVLLTDRAFGGADTLATSHTIAAGIKKLKYDIVFAGRQAIDGDTAQVGPEIAEHLGIPQVTYVEKVEVDGDTLKIRKAWEDGYEVVEVKTPVLLTAIKELNVPRYMSVEKIFGAFDKEVKMWTADDIDVDKANLGLKGSPTKVKKSSTKEVKGQGEVIDKPVKEAAAYVVSKLKEEHYI.

The protein belongs to the ETF beta-subunit/FixA family. As to quaternary structure, heterodimer of an alpha and a beta subunit. FAD is required as a cofactor. AMP serves as cofactor.

In terms of biological role, the electron transfer flavoprotein serves as a specific electron acceptor for other dehydrogenases. It transfers the electrons to the main respiratory chain via ETF-ubiquinone oxidoreductase (ETF dehydrogenase). The sequence is that of Electron transfer flavoprotein subunit beta (etfB) from Clostridium acetobutylicum (strain ATCC 824 / DSM 792 / JCM 1419 / IAM 19013 / LMG 5710 / NBRC 13948 / NRRL B-527 / VKM B-1787 / 2291 / W).